The primary structure comprises 329 residues: Glycosyltransferase family protein 64 C3 (329 aa).

An N-terminal signal peptide occupies residues Met-1–Gly-27. Residue Asn-99 is glycosylated (N-linked (GlcNAc...) asparagine). Substrate is bound by residues Ser-118 to Arg-123, Asp-139 to Asp-141, Arg-169, Arg-226 to Asp-230, and Val-271 to Arg-284. Asp-141 lines the Mn(2+) pocket. Cys-228 and Cys-287 form a disulfide bridge. Residue Asp-230 is part of the active site. The segment at Val-268–Arg-284 is substrate binding.

This sequence belongs to the glycosyltransferase 64 family. The cofactor is Mn(2+).

Its pathway is protein modification; protein glycosylation. Functionally, probable glycosyltransferase. The protein is Glycosyltransferase family protein 64 C3 of Arabidopsis thaliana (Mouse-ear cress).